Consider the following 2003-residue polypeptide: Histone acetyltransferase KAT6A (2003 aa).

One can recognise an SAMD1-like winged helix (WH) domain in the interval 1 to 77; the sequence is MVKLANPLYT…LNSYKDPDNP (77 aa). The tract at residues 1–144 is required for activation of RUNX1-1; sequence MVKLANPLYT…CGGSAAPGFH (144 aa). The required for nuclear localization stretch occupies residues 52-166; it reads ELSVKDGTIL…HGRLLKDGPL (115 aa). The region spanning 95-171 is the H15 domain; the sequence is QSVDWNKLLK…KDGPLYRLNT (77 aa). Residues 144-663 form an interaction with PML region; the sequence is HQQLRLAIKR…RKGYGRFLID (520 aa). Lys-172 carries the post-translational modification N6-acetyllysine. 2 PHD-type zinc fingers span residues 206 to 265 and 262 to 313; these read IPIC…CKTC and CKTC…CRPR. An interaction with RUNX1-1 region spans residues 312 to 663; sequence PRKKGRKLLQ…RKGYGRFLID (352 aa). Residues 336-377 form a disordered region; the sequence is GRPKNRLKKQNTVSKGPFSKVRTGPGRGRKRKITVSSQSASS. N6-acetyllysine is present on residues Lys-350 and Lys-355. A Phosphothreonine; by PKB/AKT1 modification is found at Thr-369. Ser-419 carries the phosphoserine modification. The segment at 439 to 466 is disordered; that stretch reads RKKGNRKSSTSDWPTDNQDGWESKQENE. A compositionally biased stretch (polar residues) spans 445-458; sequence KSSTSDWPTDNQDG. Ser-472 is modified (phosphoserine). The tract at residues 487–777 is catalytic; the sequence is IQEQALQKVG…VDPECLRWTP (291 aa). In terms of domain architecture, MYST-type HAT spans 503–777; it reads PQVRCPSVIE…VDPECLRWTP (275 aa). The tract at residues 506–809 is mediates interaction with BRPF1, required for histone H3 acetyltransferase activity; the sequence is RCPSVIEFGK…EPQGQERELE (304 aa). The segment at 536 to 561 adopts a C2HC MYST-type zinc-finger fold; the sequence is LYLCEFCLKYMKSRTILQQHMKKCGW. Lys-603 is subject to N6-acetyllysine; by autocatalysis. Acetyl-CoA contacts are provided by residues 644–648 and 653–659; these read SCIMI and QRKGYGR. The active-site Proton donor/acceptor is the Glu-679. Position 683 (Ser-683) interacts with acetyl-CoA. The interval 784-939 is disordered; it reads VVSEDEDEEA…DGKPDIPKGR (156 aa). Ser-786 bears the Phosphoserine mark. The span at 786–798 shows a compositional bias: acidic residues; sequence SEDEDEEADEGEK. The segment covering 799-841 has biased composition (basic and acidic residues); the sequence is EEPQGQERELETRVKVGKSVSREKKDQESSSLIETDKKPEVKE. Residues Lys-813 and Lys-816 each carry the N6-acetyllysine modification. Lys-836 participates in a covalent cross-link: Glycyl lysine isopeptide (Lys-Gly) (interchain with G-Cter in SUMO2). Basic residues predominate over residues 866–875; it reads RRGRCGRKNR. The segment covering 876 to 890 has biased composition (basic and acidic residues); that stretch reads KTQERFGDKDSKMLV. Residue Tyr-901 is modified to Phosphotyrosine. Residues 904–917 show a composition bias toward basic and acidic residues; the sequence is CEEKSETSQERFTE. Ser-941 and Ser-954 each carry phosphoserine. Residues 983 to 1083 form a disordered region; that stretch reads GFSESSEEEE…EEEESELFPR (101 aa). Position 1007 is an N6-acetyllysine (Lys-1007). Basic residues predominate over residues 1009–1030; the sequence is TLKRKKPILHRRRRVRKRKHHN. Residues 1031-1042 show a composition bias toward low complexity; that stretch reads SSVVTETISETT. Acidic residues-rich tracts occupy residues 1043-1053 and 1065-1079; these read EVLDEPFEDSD and FEME…EESE. Residues Ser-1090, Ser-1091, and Ser-1115 each carry the phosphoserine modification. Disordered stretches follow at residues 1096–1174, 1197–1438, 1455–1533, 1546–1568, and 1631–1707; these read RCQS…RKPG, IKPG…GAYQ, HTDE…PSVS, DLGS…STMG, and TCVV…CSMN. Over residues 1107 to 1120 the composition is skewed to acidic residues; that stretch reads EEEEEEEESDDADD. Positions 1136–1147 are enriched in polar residues; sequence NSASLEPDTSTP. The span at 1148-1174 shows a compositional bias: basic residues; sequence MKKKKGWPKGKSRKPIHWKKRPGRKPG. The span at 1204–1229 shows a compositional bias: basic and acidic residues; that stretch reads RTQENEEIVEVKEDLLEERKEEMHTE. 2 stretches are compositionally biased toward acidic residues: residues 1230-1241 and 1282-1299; these read PDEEAEEEEDTT and EEPQ…DEVT. The span at 1317-1334 shows a compositional bias: basic and acidic residues; that stretch reads HLDSLKTKEPEEQPARED. Lys-1336 is covalently cross-linked (Glycyl lysine isopeptide (Lys-Gly) (interchain with G-Cter in SUMO2)). 2 stretches are compositionally biased toward basic and acidic residues: residues 1352–1361 and 1393–1414; these read DSRENTKDKD and DSNT…HSEL. Positions 1473-1490 are enriched in low complexity; the sequence is HNSPISSIPSHPSQSVRS. Polar residues-rich tracts occupy residues 1502–1523 and 1550–1568; these read GYTQ…NMET and IEST…STMG. Residues 1511–1636 form an interaction with RUNX1-2 region; it reads GSLSAPSMQN…KSPQTCVVER (126 aa). An interaction with PML region spans residues 1511–1740; that stretch reads GSLSAPSMQN…YERIPGDFGA (230 aa). 2 stretches are compositionally biased toward pro residues: residues 1640-1673 and 1682-1698; these read NQQP…PPQP and QPPP…PQQQ. A required for activation of RUNX1-2 region spans residues 1912 to 1947; that stretch reads SMNMNTLNAMNSYRMTQPMMNSSYHSNPAYMNQTAQ.

This sequence belongs to the MYST (SAS/MOZ) family. Component of the MOZ/MORF complex composed at least of ING5, KAT6A, KAT6B, MEAF6 and one of BRPF1, BRD1/BRPF2 and BRPF3. Interacts with RUNX2. Interacts with RUNX1; phosphorylation of RUNX1 enhances the interaction. Interacts with p53/TP53. Interacts with PML and this interaction positively regulates its acetylation activity towards p53/TP53. Post-translationally, autoacetylated. Autoacetylation at Lys-603 is required for proper function. In terms of processing, phosphorylation at Thr-369 by PKB/AKT1 inhibits its interaction with PML and negatively regulates its acetylation activity towards p53/TP53.

Its subcellular location is the nucleus. The protein localises to the nucleolus. It is found in the nucleoplasm. It localises to the PML body. The catalysed reaction is L-lysyl-[protein] + acetyl-CoA = N(6)-acetyl-L-lysyl-[protein] + CoA + H(+). In terms of biological role, histone acetyltransferase that acetylates lysine residues in histone H3 and histone H4 (in vitro). Component of the MOZ/MORF complex which has a histone H3 acetyltransferase activity. May act as a transcriptional coactivator for RUNX1 and RUNX2. Acetylates p53/TP53 at 'Lys-120' and 'Lys-382' and controls its transcriptional activity via association with PML. This chain is Histone acetyltransferase KAT6A (Kat6a), found in Mus musculus (Mouse).